We begin with the raw amino-acid sequence, 320 residues long: Formimidoylglutamase (320 aa).

6 residues coordinate Mn(2+): H125, D153, H155, D157, D244, and D246.

Belongs to the arginase family. Mn(2+) is required as a cofactor.

It carries out the reaction N-formimidoyl-L-glutamate + H2O = formamide + L-glutamate. It participates in amino-acid degradation; L-histidine degradation into L-glutamate; L-glutamate from N-formimidoyl-L-glutamate (hydrolase route): step 1/1. Functionally, catalyzes the conversion of N-formimidoyl-L-glutamate to L-glutamate and formamide. This is Formimidoylglutamase from Rhodococcus opacus (strain B4).